A 296-amino-acid polypeptide reads, in one-letter code: Enoyl-CoA hydratase domain-containing protein 2, mitochondrial (296 aa).

Residues 1-17 (MLRVLPRALRLPCSWRF) constitute a mitochondrion transit peptide. K101 carries the post-translational modification N6-acetyllysine; alternate. An N6-succinyllysine; alternate modification is found at K101.

Belongs to the enoyl-CoA hydratase/isomerase family.

It is found in the mitochondrion. This is Enoyl-CoA hydratase domain-containing protein 2, mitochondrial (Echdc2) from Mus musculus (Mouse).